The sequence spans 261 residues: Thiamine thiazole synthase (261 aa).

NAD(+)-binding positions include serine 40, glutamate 59–arginine 60, glycine 67, valine 133, and histidine 159–aspartate 161. The Fe cation site is built by aspartate 161 and histidine 176. NAD(+) is bound by residues serine 179 and methionine 226. Position 236 (arginine 236) interacts with glycine.

The protein belongs to the THI4 family. In terms of assembly, homooctamer; tetramer of dimers. The cofactor is Fe(2+).

It carries out the reaction hydrogen sulfide + glycine + NAD(+) = ADP-5-ethyl-4-methylthiazole-2-carboxylate + nicotinamide + 3 H2O + H(+). It functions in the pathway cofactor biosynthesis; thiamine diphosphate biosynthesis. Functionally, involved in the biosynthesis of the thiazole moiety of thiamine. Catalyzes the conversion of NAD and glycine to adenosine diphosphate 5-(2-hydroxyethyl)-4-methylthiazole-2-carboxylate (ADT), an adenylated thiazole intermediate, using free sulfide as a source of sulfur. This Methanococcus maripaludis (strain C6 / ATCC BAA-1332) protein is Thiamine thiazole synthase.